The primary structure comprises 173 residues: Monothiol glutaredoxin-S14, chloroplastic (173 aa).

The transit peptide at 1 to 63 (MALRSVKTPT…KLKPTKFRCS (63 aa)) directs the protein to the chloroplast. Residues 72 to 173 (KDTLEKLVNS…QEEVEKAMCS (102 aa)) enclose the Glutaredoxin domain. Residue lysine 89 participates in glutathione binding. [2Fe-2S] cluster-binding residues include cysteine 97 and phenylalanine 99. Cysteine 97 is subject to S-glutathionyl cysteine. The required for CAX1 activation stretch occupies residues 97 to 100 (CGFS). Glutathione-binding residues include arginine 126 and lysine 130. Positions 133-137 (SNWPT) are required for CAX1 activation. Residues phenylalanine 138 and 151-152 (CD) contribute to the glutathione site.

This sequence belongs to the glutaredoxin family. CGFS subfamily. As to quaternary structure, [2Fe-2S]-bridged holo-homodimer. Interacts with N-terminal part of CAX1 in yeast. Interacts in vitro with SUFE1, BOLA1, BOLA2 and BOLA4. Interacts in vivo only with SUFE1, BOLA1 and BOLA4. Interacts with SBP1. In terms of tissue distribution, highly expressed in leaves, at intermediate levels in stems and at lower levels in roots and flowers.

It is found in the plastid. It localises to the chloroplast. Its function is as follows. May only reduce GSH-thiol disulfides, but not protein disulfides (Potential). Probably involved in the regulation of the redox state of the BOLA proteins (Potential). May act as Fe-S cluster donors to Fe-S cluster-requiring proteins. May protect cells against protein oxidative damage. May regulate CAX cation transporters. The GRXS14-BOLA1 heterodimer binds a labile, oxygen sensitive Fe-S cluster. This is Monothiol glutaredoxin-S14, chloroplastic from Arabidopsis thaliana (Mouse-ear cress).